Consider the following 158-residue polypeptide: NADPH-dependent 7-cyano-7-deazaguanine reductase (158 aa).

The disordered stretch occupies residues 1 to 37 (MAKRSIKSETSPELQLGRPVTAPDSPETARLDRVPNP). Residues 27-37 (ETARLDRVPNP) are compositionally biased toward basic and acidic residues. Cys-56 functions as the Thioimide intermediate in the catalytic mechanism. Asp-63 (proton donor) is an active-site residue. Residues 78–80 (VES) and 97–98 (HE) each bind substrate.

This sequence belongs to the GTP cyclohydrolase I family. QueF type 1 subfamily.

The protein localises to the cytoplasm. It catalyses the reaction 7-aminomethyl-7-carbaguanine + 2 NADP(+) = 7-cyano-7-deazaguanine + 2 NADPH + 3 H(+). It participates in tRNA modification; tRNA-queuosine biosynthesis. Functionally, catalyzes the NADPH-dependent reduction of 7-cyano-7-deazaguanine (preQ0) to 7-aminomethyl-7-deazaguanine (preQ1). The sequence is that of NADPH-dependent 7-cyano-7-deazaguanine reductase from Bradyrhizobium sp. (strain BTAi1 / ATCC BAA-1182).